Here is a 265-residue protein sequence, read N- to C-terminus: 4-hydroxy-2-oxo-heptane-1,7-dioate aldolase (265 aa).

The active-site Proton acceptor is the His-45. Residue Gln-147 participates in substrate binding. Glu-149 contacts a divalent metal cation. The substrate site is built by Ala-174 and Asp-175. A divalent metal cation is bound at residue Asp-175.

The protein belongs to the HpcH/HpaI aldolase family. As to quaternary structure, homohexamer; trimer of dimers. A divalent metal cation is required as a cofactor.

It carries out the reaction 4-hydroxy-2-oxoheptanedioate = succinate semialdehyde + pyruvate. The protein operates within aromatic compound metabolism; 4-hydroxyphenylacetate degradation; pyruvate and succinate semialdehyde from 4-hydroxyphenylacetate: step 7/7. In terms of biological role, catalyzes the reversible retro-aldol cleavage of 4-hydroxy-2-ketoheptane-1,7-dioate (HKHD) to pyruvate and succinic semialdehyde. This Klebsiella pneumoniae subsp. pneumoniae (strain ATCC 700721 / MGH 78578) protein is 4-hydroxy-2-oxo-heptane-1,7-dioate aldolase.